Reading from the N-terminus, the 106-residue chain is EspC protein homolog (106 aa).

The protein belongs to the EspC family.

The chain is EspC protein homolog from Mycobacterium leprae (strain TN).